A 139-amino-acid polypeptide reads, in one-letter code: 3-hydroxyacyl-[acyl-carrier-protein] dehydratase FabZ (139 aa).

The active site involves H47.

The protein belongs to the thioester dehydratase family. FabZ subfamily.

It is found in the cytoplasm. The catalysed reaction is a (3R)-hydroxyacyl-[ACP] = a (2E)-enoyl-[ACP] + H2O. Functionally, involved in unsaturated fatty acids biosynthesis. Catalyzes the dehydration of short chain beta-hydroxyacyl-ACPs and long chain saturated and unsaturated beta-hydroxyacyl-ACPs. The protein is 3-hydroxyacyl-[acyl-carrier-protein] dehydratase FabZ of Clostridium perfringens (strain ATCC 13124 / DSM 756 / JCM 1290 / NCIMB 6125 / NCTC 8237 / Type A).